The chain runs to 218 residues: Probable transaldolase (218 aa).

Lys-84 functions as the Schiff-base intermediate with substrate in the catalytic mechanism.

This sequence belongs to the transaldolase family. Type 3B subfamily.

It is found in the cytoplasm. It catalyses the reaction D-sedoheptulose 7-phosphate + D-glyceraldehyde 3-phosphate = D-erythrose 4-phosphate + beta-D-fructose 6-phosphate. It participates in carbohydrate degradation; pentose phosphate pathway; D-glyceraldehyde 3-phosphate and beta-D-fructose 6-phosphate from D-ribose 5-phosphate and D-xylulose 5-phosphate (non-oxidative stage): step 2/3. In terms of biological role, transaldolase is important for the balance of metabolites in the pentose-phosphate pathway. This chain is Probable transaldolase, found in Bartonella henselae (strain ATCC 49882 / DSM 28221 / CCUG 30454 / Houston 1) (Rochalimaea henselae).